A 756-amino-acid chain; its full sequence is 1,4-alpha-glucan branching enzyme GlgB (756 aa).

Asp-431 (nucleophile) is an active-site residue. Glu-484 functions as the Proton donor in the catalytic mechanism.

Belongs to the glycosyl hydrolase 13 family. GlgB subfamily. Monomer.

The catalysed reaction is Transfers a segment of a (1-&gt;4)-alpha-D-glucan chain to a primary hydroxy group in a similar glucan chain.. It participates in glycan biosynthesis; glycogen biosynthesis. Catalyzes the formation of the alpha-1,6-glucosidic linkages in glycogen by scission of a 1,4-alpha-linked oligosaccharide from growing alpha-1,4-glucan chains and the subsequent attachment of the oligosaccharide to the alpha-1,6 position. The polypeptide is 1,4-alpha-glucan branching enzyme GlgB (Prochlorococcus marinus (strain MIT 9303)).